A 289-amino-acid chain; its full sequence is Iodotyrosine deiodinase 1 (289 aa).

The helical transmembrane segment at 1-21 (MFLLTPVLVAVVCILMVWIFK) threads the bilayer. Residues 100–104 (RRSVR) and 128–129 (SG) contribute to the FMN site. 3,5-diiodo-L-tyrosine-binding residues include A130, E157, Y161, and K182. Residues A130, E157, Y161, and K182 each contribute to the 3-iodo-L-tyrosine site. Residues 237–239 (TTT) and R279 contribute to the FMN site.

Belongs to the nitroreductase family. Homodimer. It depends on FMN as a cofactor. Detected in thyroid (at protein level).

The protein resides in the cell membrane. The protein localises to the cytoplasmic vesicle membrane. It catalyses the reaction 2 iodide + L-tyrosine + 2 NADP(+) = 3,5-diiodo-L-tyrosine + 2 NADPH + H(+). The catalysed reaction is iodide + L-tyrosine + NADP(+) = 3-iodo-L-tyrosine + NADPH. It carries out the reaction 3-iodo-L-tyrosine + iodide + NADP(+) = 3,5-diiodo-L-tyrosine + NADPH + H(+). The enzyme catalyses L-tyrosine + chloride + NADP(+) = 3-chloro-L-tyrosine + NADPH. It catalyses the reaction bromide + L-tyrosine + NADP(+) = 3-bromo-L-tyrosine + NADPH. In terms of biological role, catalyzes the dehalogenation of halotyrosines such as 3-bromo-L-tyrosine, 3-chloro-L-tyrosine, 3-iodo-L-tyrosine and 3,5-diiodo-L-tyrosine. During thyroid hormone biosynthesis, facilitates iodide salvage by catalysing the oxidative NADPH-dependent deiodination of the halogenated by-products of thyroid hormone production, monoiodotyrosine (L-MIT) and diiodotyrosine (L-DIT). The scavanged iodide can then reenter the hormone-producing pathways. Acts more efficiently on 3-iodo-L-tyrosine than 3,5-diiodo-L-tyrosine. The chain is Iodotyrosine deiodinase 1 (IYD) from Sus scrofa (Pig).